The following is a 403-amino-acid chain: Alkaline protease 1 (403 aa).

The first 21 residues, 1–21, serve as a signal peptide directing secretion; that stretch reads MLSIKRTLLLLGAVLPAVFGA. Residues 22–125 constitute a propeptide that is removed on maturation; it reads PVQETRRAAQ…QIWYIDALTT (104 aa). In terms of domain architecture, Inhibitor I9 spans 36–120; that stretch reads KYIVTFKPGT…HVEEDQIWYI (85 aa). The Peptidase S8 domain occupies 130–403; the sequence is PWGLGSISHK…PNKLAYNGNA (274 aa). Catalysis depends on charge relay system residues Asp-162 and His-193. Asn-253 and Asn-307 each carry an N-linked (GlcNAc...) asparagine glycan. Catalysis depends on Ser-349, which acts as the Charge relay system.

The protein belongs to the peptidase S8 family.

It localises to the secreted. The enzyme catalyses Hydrolysis of proteins with broad specificity, and of Bz-Arg-OEt &gt; Ac-Tyr-OEt. Does not hydrolyze peptide amides.. Its function is as follows. Secreted alkaline protease that allows assimilation of proteinaceous substrates. In Neosartorya fischeri (strain ATCC 1020 / DSM 3700 / CBS 544.65 / FGSC A1164 / JCM 1740 / NRRL 181 / WB 181) (Aspergillus fischerianus), this protein is Alkaline protease 1 (alp1).